The sequence spans 897 residues: Valine--tRNA ligase (897 aa).

The short motif at 46-56 (PNVTGSLHMGH) is the 'HIGH' region element. The 'KMSKS' region motif lies at 532–536 (KMSKT). Lys-535 serves as a coordination point for ATP. The stretch at 839–897 (LRRSLEKLDKESGVLAARLDNASYLANAPAELVTESRAKLAEQRAQAAILAEQLARLEN) forms a coiled coil.

Belongs to the class-I aminoacyl-tRNA synthetase family. ValS type 1 subfamily. Monomer.

The protein localises to the cytoplasm. It catalyses the reaction tRNA(Val) + L-valine + ATP = L-valyl-tRNA(Val) + AMP + diphosphate. Its function is as follows. Catalyzes the attachment of valine to tRNA(Val). As ValRS can inadvertently accommodate and process structurally similar amino acids such as threonine, to avoid such errors, it has a 'posttransfer' editing activity that hydrolyzes mischarged Thr-tRNA(Val) in a tRNA-dependent manner. The sequence is that of Valine--tRNA ligase from Gloeobacter violaceus (strain ATCC 29082 / PCC 7421).